The following is a 393-amino-acid chain: Reticulon-like protein 2 (393 aa).

Over residues 1 to 21 (MNRNTTTNKNANLNNSRNANA) the composition is skewed to low complexity. The interval 1-25 (MNRNTTTNKNANLNNSRNANAPGEA) is disordered. Topologically, residues 1–60 (MNRNTTTNKNANLNNSRNANAPGEAGHQNKTGLIYWTNPSKSGASFAATLVSLLILRNVN) are cytoplasmic. One can recognise a Reticulon domain in the interval 30–236 (KTGLIYWTNP…SISNENKSST (207 aa)). A helical transmembrane segment spans residues 61-81 (VISVLLKIGYMVLFTSFAVEL). The Lumenal portion of the chain corresponds to 82–149 (STKVLFDKGV…IGVSLYFLHG (68 aa)). Residue N137 is glycosylated (N-linked (GlcNAc...) asparagine). A helical membrane pass occupies residues 150–170 (LFAIFSMNTVLIMTTIFLYTV). At 171-393 (PLIYDRKQAR…HGLKQKLQHA (223 aa)) the chain is on the cytoplasmic side. 2 disordered regions span residues 214-313 (IIPP…DVKT) and 339-393 (GDYN…LQHA). Polar residues predominate over residues 220-285 (DEGSYSTSIS…PVSQNENIGT (66 aa)). A Phosphoserine modification is found at S278. Residues 289–313 (GKQEIPTEKDFNNRHENFSKPDVKT) are compositionally biased toward basic and acidic residues. Polar residues predominate over residues 365–376 (PAESQSIPIKNN). Positions 381–393 (KTTHGLKQKLQHA) are enriched in basic residues.

The protein resides in the endoplasmic reticulum membrane. The sequence is that of Reticulon-like protein 2 (RTN2) from Saccharomyces cerevisiae (strain ATCC 204508 / S288c) (Baker's yeast).